Reading from the N-terminus, the 391-residue chain is Formate-dependent phosphoribosylglycinamide formyltransferase (391 aa).

N(1)-(5-phospho-beta-D-ribosyl)glycinamide is bound by residues glutamate 18–leucine 19 and glutamate 78. Residues arginine 110, lysine 151, serine 156–glutamine 161, glutamate 191–isoleucine 194, and glutamate 199 each bind ATP. Residues aspartate 115–leucine 305 form the ATP-grasp domain. Residues glutamate 264 and glutamate 276 each contribute to the Mg(2+) site. N(1)-(5-phospho-beta-D-ribosyl)glycinamide-binding positions include aspartate 283, lysine 353, and arginine 360 to arginine 361.

It belongs to the PurK/PurT family. In terms of assembly, homodimer.

It carries out the reaction N(1)-(5-phospho-beta-D-ribosyl)glycinamide + formate + ATP = N(2)-formyl-N(1)-(5-phospho-beta-D-ribosyl)glycinamide + ADP + phosphate + H(+). The protein operates within purine metabolism; IMP biosynthesis via de novo pathway; N(2)-formyl-N(1)-(5-phospho-D-ribosyl)glycinamide from N(1)-(5-phospho-D-ribosyl)glycinamide (formate route): step 1/1. In terms of biological role, involved in the de novo purine biosynthesis. Catalyzes the transfer of formate to 5-phospho-ribosyl-glycinamide (GAR), producing 5-phospho-ribosyl-N-formylglycinamide (FGAR). Formate is provided by PurU via hydrolysis of 10-formyl-tetrahydrofolate. In Synechococcus elongatus (strain ATCC 33912 / PCC 7942 / FACHB-805) (Anacystis nidulans R2), this protein is Formate-dependent phosphoribosylglycinamide formyltransferase.